Consider the following 87-residue polypeptide: Beta-mammal toxin Css4 (87 aa).

The N-terminal stretch at 1-19 (MNSLLMITACLALVGTVWA) is a signal peptide. An LCN-type CS-alpha/beta domain is found at 20-85 (KEGYLVNSYT…VWPLPNKTCN (66 aa)). Intrachain disulfides connect cysteine 31–cysteine 84, cysteine 35–cysteine 60, cysteine 44–cysteine 65, and cysteine 48–cysteine 67. Asparagine 85 is modified (asparagine amide).

The protein belongs to the long (4 C-C) scorpion toxin superfamily. Sodium channel inhibitor family. Beta subfamily. In terms of tissue distribution, expressed by the venom gland.

It is found in the secreted. Functionally, beta toxins bind voltage-independently at site-4 of sodium channels (Nav) and shift the voltage of activation toward more negative potentials thereby affecting sodium channel activation and promoting spontaneous and repetitive firing. This toxin is active only on mammals. This Centruroides suffusus (Durango bark scorpion) protein is Beta-mammal toxin Css4.